Here is a 724-residue protein sequence, read N- to C-terminus: uncharacterized protein (724 aa).

Disordered stretches follow at residues 1-23, 166-477, 496-517, and 532-691; these read MEDR…IPDN, PDGY…PPRD, EAHD…AHGP, and DHPI…PALS. Polar residues-rich tracts occupy residues 227–245 and 270–296; these read VSQS…TVNQ and STTL…TSDA. Positions 304 to 322 are enriched in basic and acidic residues; sequence TRDHDRYGNGRGPDTDRLE. Residues 403-413 are compositionally biased toward polar residues; it reads PSSSHSETPNM. 2 stretches are compositionally biased toward basic and acidic residues: residues 550 to 560 and 637 to 657; these read RNHEFTEDKRL and LRHD…DLAA. Residues 682–691 are compositionally biased toward low complexity; sequence RLAAASPALS.

This is an uncharacterized protein from Neurospora crassa (strain ATCC 24698 / 74-OR23-1A / CBS 708.71 / DSM 1257 / FGSC 987).